The sequence spans 85 residues: Alpha-conotoxin Lt28.1 (85 aa).

Positions 1–21 (MPKLEMMLLVLLILPLCYIDA) are cleaved as a signal peptide. A propeptide spanning residues 22 to 40 (VGPPPPWNMEDEIIEHWQK) is cleaved from the precursor. Cystine bridges form between Cys61–Cys74, Cys66–Cys84, Cys67–Cys79, and Cys72–Cys81.

This sequence belongs to the conotoxin D superfamily. As to expression, expressed by the venom duct.

It localises to the secreted. Its function is as follows. Alpha-conotoxins act on postsynaptic membranes, they bind to the nicotinic acetylcholine receptors (nAChR) and thus inhibit them. This toxin weakly inhibits alpha-9-alpha-10/CHRNA9-CHRNA10 nAChRs (IC(50)=3 uM). The protein is Alpha-conotoxin Lt28.1 of Conus litteratus (Lettered cone).